The chain runs to 176 residues: Protein SPMIP1 (176 aa).

The tract at residues T55–P80 is disordered. Residues P61 to P80 are compositionally biased toward pro residues.

The protein is Protein SPMIP1 of Homo sapiens (Human).